Reading from the N-terminus, the 713-residue chain is MYRLGSQGRSIQSQLQNGDSSSGRPLQLQGTGMREAQRIPQQLDYLLAEIISPNEDTNVIGYLAYYYPKLKNEQNVALLTDFFLRCPTYFSHSNVVSLRNNYPVMEAFNYIMTTKFKVSQPTVPFYRFYAAVLASLLNCEKTDPSHHWKLIPILTGVLLSIKGRDDVELYPDHSRSIKGSDTAVAQLLQRCLLRFYQSGDARSYDLNALVIISMSCALDYVEDDTIKKILYCFNYTRAIIDLIYYSPYGLNDSDIPLLSDSSVNSQSFDQLLNNNPALKHLNRLSFLFERTVKLNDGSIQSNLNDIDISLNKMQSFSEKLSKKISVLDDDSSKGVGQLLRQCLYASIIIHQAILTTFFQLDNADYTKYFLPSFSRKILSILFNLFFIVDRIGTGGFQPYNFVYLTCLQGIIQYDMKTAESLVKTFTTGINYSSLKDSEVARAKLLFTLNLMEQIVNICSDDLRLELIVPLVEDLVNNKNACVDIHNHVFKSIFESAHSVILKFFTVVDSSVKNVDYETNVTLVSEKIIPYLTLVIDQFPEFLSINQLDIAIETISRTVFPDSPIYSYDKNISSMFLNVLFNKCLTVDNDELVELPAIEAVVAPKNDEENNTSDAQDGGPKELQSLNDLKSRRSALISALISVFPLIPVKDYTKWLSIAFYDLIVATPERTERAFLQERLWDCVVGTNKYDPQKGNLGIMWWYENVNAQSTAKL.

Residues 1–31 (MYRLGSQGRSIQSQLQNGDSSSGRPLQLQGT) are disordered. A compositionally biased stretch (polar residues) spans 7-30 (QGRSIQSQLQNGDSSSGRPLQLQG). The Microbody targeting signal motif lies at 711–713 (AKL).

Interacts with PEX5 (via N-terminus).

It is found in the peroxisome membrane. Functionally, essential component of the machinery required for the import of both PTS1 and PTS2 (and perhaps all) peroxisomal matrix proteins. Binding of PEX8 to the N-terminus of PEX5 cargo receptor induces a conformational change of the TPR domains and decrease their binding affinity to cargo, facilitating the release of the PTS1 proteins within the peroxisome. The protein is Peroxisomal biogenesis factor 8 of Komagataella phaffii (strain GS115 / ATCC 20864) (Yeast).